The chain runs to 115 residues: Tyrosine-protein phosphatase 21 (115 aa).

The region spanning 1–115 is the Tyrosine-protein phosphatase domain; that stretch reads WLMIVEKECR…EIGGDAPMVV (115 aa). Asp-83 contacts substrate.

This sequence belongs to the protein-tyrosine phosphatase family.

It catalyses the reaction O-phospho-L-tyrosyl-[protein] + H2O = L-tyrosyl-[protein] + phosphate. This is Tyrosine-protein phosphatase 21 (STY-21) from Styela plicata (Wrinkled sea squirt).